A 115-amino-acid polypeptide reads, in one-letter code: Large ribosomal subunit protein bL20 (115 aa).

The protein belongs to the bacterial ribosomal protein bL20 family.

In terms of biological role, binds directly to 23S ribosomal RNA and is necessary for the in vitro assembly process of the 50S ribosomal subunit. It is not involved in the protein synthesizing functions of that subunit. This Borreliella burgdorferi (strain ATCC 35210 / DSM 4680 / CIP 102532 / B31) (Borrelia burgdorferi) protein is Large ribosomal subunit protein bL20 (rplT).